Reading from the N-terminus, the 514-residue chain is ATP synthase subunit alpha (514 aa).

170–177 (GDRQTGKT) serves as a coordination point for ATP.

This sequence belongs to the ATPase alpha/beta chains family. F-type ATPases have 2 components, CF(1) - the catalytic core - and CF(0) - the membrane proton channel. CF(1) has five subunits: alpha(3), beta(3), gamma(1), delta(1), epsilon(1). CF(0) has three main subunits: a(1), b(2) and c(9-12). The alpha and beta chains form an alternating ring which encloses part of the gamma chain. CF(1) is attached to CF(0) by a central stalk formed by the gamma and epsilon chains, while a peripheral stalk is formed by the delta and b chains.

The protein resides in the cell inner membrane. It catalyses the reaction ATP + H2O + 4 H(+)(in) = ADP + phosphate + 5 H(+)(out). Produces ATP from ADP in the presence of a proton gradient across the membrane. The alpha chain is a regulatory subunit. In Acinetobacter baumannii (strain AB307-0294), this protein is ATP synthase subunit alpha.